Consider the following 80-residue polypeptide: Defensin-like protein 13 (80 aa).

Residues methionine 1–alanine 29 form the signal peptide. Glutamine 30 carries the post-translational modification Pyrrolidone carboxylic acid. Intrachain disulfides connect cysteine 33–cysteine 80, cysteine 44–cysteine 65, cysteine 50–cysteine 74, and cysteine 54–cysteine 76.

It belongs to the DEFL family. Forms oligomers in its native state. In terms of tissue distribution, expressed predominantly in siliques and dry seeds.

It localises to the secreted. Its function is as follows. Confers broad-spectrum resistance to pathogens. Possesses antifungal activity sensitive to inorganic cations in vitro. In Arabidopsis thaliana (Mouse-ear cress), this protein is Defensin-like protein 13 (PDF1.1).